Consider the following 393-residue polypeptide: Chorismate synthase (393 aa).

Arg40 and Arg46 together coordinate NADP(+). Residues 129–131 (RSS), 249–250 (QA), Gly301, 316–320 (KPIPT), and Arg342 each bind FMN.

This sequence belongs to the chorismate synthase family. Homotetramer. It depends on FMNH2 as a cofactor.

The catalysed reaction is 5-O-(1-carboxyvinyl)-3-phosphoshikimate = chorismate + phosphate. It participates in metabolic intermediate biosynthesis; chorismate biosynthesis; chorismate from D-erythrose 4-phosphate and phosphoenolpyruvate: step 7/7. Its function is as follows. Catalyzes the anti-1,4-elimination of the C-3 phosphate and the C-6 proR hydrogen from 5-enolpyruvylshikimate-3-phosphate (EPSP) to yield chorismate, which is the branch point compound that serves as the starting substrate for the three terminal pathways of aromatic amino acid biosynthesis. This reaction introduces a second double bond into the aromatic ring system. The sequence is that of Chorismate synthase from Geobacter sulfurreducens (strain ATCC 51573 / DSM 12127 / PCA).